The following is a 367-amino-acid chain: Ferredoxin--NADP reductase 2 (367 aa).

FAD is bound by residues aspartate 56, glutamine 64, tyrosine 69, valine 109, phenylalanine 144, aspartate 309, and threonine 350.

Belongs to the ferredoxin--NADP reductase type 2 family. In terms of assembly, homodimer. FAD is required as a cofactor.

It carries out the reaction 2 reduced [2Fe-2S]-[ferredoxin] + NADP(+) + H(+) = 2 oxidized [2Fe-2S]-[ferredoxin] + NADPH. This Cupriavidus metallidurans (strain ATCC 43123 / DSM 2839 / NBRC 102507 / CH34) (Ralstonia metallidurans) protein is Ferredoxin--NADP reductase 2.